Here is an 851-residue protein sequence, read N- to C-terminus: DNA mismatch repair protein MutS (851 aa).

ATP is bound at residue 602 to 609 (GPNMSGKS).

It belongs to the DNA mismatch repair MutS family.

Functionally, this protein is involved in the repair of mismatches in DNA. It is possible that it carries out the mismatch recognition step. This protein has a weak ATPase activity. In Streptococcus pyogenes serotype M2 (strain MGAS10270), this protein is DNA mismatch repair protein MutS.